Consider the following 133-residue polypeptide: Antifungal protein ginkbilobin-like protein 2 (133 aa).

The N-terminal stretch at 1–24 (MSMGSFGFALAVMVLAVLVASAAG) is a signal peptide. One can recognise a Gnk2-homologous domain in the interval 28–133 (TNLVSSACNG…CFIRYEQYSI (106 aa)). Asparagine 36 lines the alpha-D-mannopyranose pocket. 2 cysteine pairs are disulfide-bonded: cysteine 87-cysteine 96 and cysteine 99-cysteine 124. The alpha-D-mannopyranose site is built by arginine 118 and glutamate 129.

Its function is as follows. Exerts antifungal activity through its carbohydrate-binding specificity. The polypeptide is Antifungal protein ginkbilobin-like protein 2 (Picea glauca (White spruce)).